We begin with the raw amino-acid sequence, 395 residues long: Argininosuccinate synthase (395 aa).

Residue 8–16 (AYSGGLDTS) participates in ATP binding. L-citrulline-binding residues include Y86 and S91. G116 is an ATP binding site. Residues T118, N122, and D123 each coordinate L-aspartate. N122 contributes to the L-citrulline binding site. 5 residues coordinate L-citrulline: R126, S172, S181, E257, and Y269.

It belongs to the argininosuccinate synthase family. Type 1 subfamily. In terms of assembly, homotetramer.

Its subcellular location is the cytoplasm. It carries out the reaction L-citrulline + L-aspartate + ATP = 2-(N(omega)-L-arginino)succinate + AMP + diphosphate + H(+). Its pathway is amino-acid biosynthesis; L-arginine biosynthesis; L-arginine from L-ornithine and carbamoyl phosphate: step 2/3. This chain is Argininosuccinate synthase, found in Methanosarcina barkeri (strain Fusaro / DSM 804).